Here is a 370-residue protein sequence, read N- to C-terminus: MAVVEAETRVFLEVRRRLQSALLILGEPDEGGMNLDISVTPTSLLMRSPDGCTEIRLPAGVRLAPSSCGGLQYISGDGLHLRLRAQAESSPQPISGFNQSLQAQECCSFYCQSCGEVTIKDRKLLRVLPLPSENWSALVGEWCCHPDPFANKPLHPRENDCFVGDSFFLVNSRSDLEQEPKANTKVICKRCKVMLGETVSSETTKFYMTEVIVQPSEGSFPNIPRSQFVQSVIARCLVELCTARSTFRFTIQGQDGKVYILLWVLNSDSLVMEPLSSSGCIRKFPLLEDSLEADSGSAWNAIKVLYQPCIKSRNKELASSWEGDISVHPLTLPSTTCLELLLILSRNNASLPLSLRQMNSFQLWCSHCKT.

Ala-2 is subject to N-acetylalanine. The BRAT1-like motif motif lies at 129 to 159 (PLPSENWSALVGEWCCHPDPFANKPLHPREN). Cys-144 is a Zn(2+) binding site. The tract at residues 214 to 236 (QPSEGSFPNIPRSQFVQSVIARC) is interaction with UBE2C. Residues 332–368 (LPSTTCLELLLILSRNNASLPLSLRQMNSFQLWCSHC) are HECT-like.

Interacts with UBE2C/UbcH10 (E2 ubiquitin-conjugating enzyme). In vitro, interacts with cyclin-B. Post-translationally, ubiquitinated by UBCH10 (E2 ubiquitin-conjugating enzyme).

It is found in the cytoplasm. It carries out the reaction S-ubiquitinyl-[E2 ubiquitin-conjugating enzyme]-L-cysteine + [acceptor protein]-L-lysine = [E2 ubiquitin-conjugating enzyme]-L-cysteine + N(6)-ubiquitinyl-[acceptor protein]-L-lysine.. Its pathway is protein modification; protein ubiquitination. Its function is as follows. E3 ubiquitin-protein ligase which accepts ubiquitin from specific E2 ubiquitin-conjugating enzymes, and transfers it to substrates, generally promoting their degradation by the proteasome. Independently of its E3 ubiquitin-protein ligase activity, acts as an inhibitor of CPSF3 endonuclease activity by blocking CPSF3 active site. This chain is E3 ubiquitin-protein ligase E3D (Ube3d), found in Rattus norvegicus (Rat).